Reading from the N-terminus, the 126-residue chain is Holo-[acyl-carrier-protein] synthase (126 aa).

Mg(2+) contacts are provided by Asp-9 and Glu-58.

Belongs to the P-Pant transferase superfamily. AcpS family. The cofactor is Mg(2+).

It is found in the cytoplasm. It carries out the reaction apo-[ACP] + CoA = holo-[ACP] + adenosine 3',5'-bisphosphate + H(+). Its function is as follows. Transfers the 4'-phosphopantetheine moiety from coenzyme A to a Ser of acyl-carrier-protein. This Citrobacter koseri (strain ATCC BAA-895 / CDC 4225-83 / SGSC4696) protein is Holo-[acyl-carrier-protein] synthase.